The primary structure comprises 664 residues: Bifunctional 3-dehydroquinate synthase/phosphatase (664 aa).

A 3-dehydroquinate synthase region spans residues Met1–Phe352. NAD(+)-binding positions include Asp61–Lys66, Gly95–Asp99, Thr119–Ser120, Lys132, Lys141, and Phe159–Thr162. Zn(2+)-binding residues include Glu174, His238, and His255. The GPPA/PPX stretch occupies residues Leu353–Lys664.

The protein in the N-terminal section; belongs to the sugar phosphate cyclases superfamily. Dehydroquinate synthase family. It in the C-terminal section; belongs to the GppA/Ppx family. In terms of assembly, monomer. NAD(+) is required as a cofactor. Co(2+) serves as cofactor. The cofactor is Zn(2+).

Its subcellular location is the cytoplasm. The catalysed reaction is 7-phospho-2-dehydro-3-deoxy-D-arabino-heptonate = 3-dehydroquinate + phosphate. It functions in the pathway metabolic intermediate biosynthesis; chorismate biosynthesis; chorismate from D-erythrose 4-phosphate and phosphoenolpyruvate: step 2/7. This chain is Bifunctional 3-dehydroquinate synthase/phosphatase (aroB), found in Fusobacterium nucleatum subsp. nucleatum (strain ATCC 25586 / DSM 15643 / BCRC 10681 / CIP 101130 / JCM 8532 / KCTC 2640 / LMG 13131 / VPI 4355).